We begin with the raw amino-acid sequence, 253 residues long: MEAEGLGWLLVPLHQLVSWGAAGAMVFGGVVPYIPQYRDIRRTQNAEGFSTYVCLVLLVANILRILFWFGRHFESPLLWQSVVMILTMLLMLKLCTEVRVANELNLKRRVFSDFDPHHFWHWSSFADYVQCVLAFTGVAGYITYLSIDSALFVETLGFLAVLTEAMLGVPQLYRNHRHQSTEGMSIKMVLMWTSGDTFKTAYFLLNGAPLQFSVCGLLQVLVDLAILGQAYVFTRYPLKPAPHAAHPASAKAL.

The next 6 helical transmembrane spans lie at 7–27, 49–69, 72–92, 125–145, 150–170, and 214–234; these read GWLL…AMVF, FSTY…LFWF, HFES…LLML, FADY…ITYL, ALFV…LGVP, and VCGL…YVFT. The region spanning 14-80 is the PQ-loop 1 domain; that stretch reads HQLVSWGAAG…RHFESPLLWQ (67 aa). The PQ-loop 2 domain maps to 160-215; the sequence is AVLTEAMLGVPQLYRNHRHQSTEGMSIKMVLMWTSGDTFKTAYFLLNGAPLQFSVC.

The protein localises to the membrane. The polypeptide is Solute carrier family 66 member 2 (SLC66A2) (Bos taurus (Bovine)).